The primary structure comprises 116 residues: Large ribosomal subunit protein uL18 (116 aa).

The protein belongs to the universal ribosomal protein uL18 family. Part of the 50S ribosomal subunit; part of the 5S rRNA/L5/L18/L25 subcomplex. Contacts the 5S and 23S rRNAs.

This is one of the proteins that bind and probably mediate the attachment of the 5S RNA into the large ribosomal subunit, where it forms part of the central protuberance. This Pseudoalteromonas translucida (strain TAC 125) protein is Large ribosomal subunit protein uL18.